A 173-amino-acid polypeptide reads, in one-letter code: CKLF-like MARVEL transmembrane domain-containing protein 8 (173 aa).

Positions 36-168 constitute an MARVEL domain; it reads FLRTLPGFLI…NTYFSFIAWR (133 aa). 4 consecutive transmembrane segments (helical) span residues 40-60, 70-90, 105-125, and 147-167; these read LPGF…TLIA, FGWV…FLII, TTVG…AAVV, and FFAF…FIAW.

This sequence belongs to the chemokine-like factor family. Highly expressed in liver and pancreas.

The protein resides in the membrane. It localises to the cytoplasm. It is found in the nucleus. This is CKLF-like MARVEL transmembrane domain-containing protein 8 (CMTM8) from Homo sapiens (Human).